The chain runs to 201 residues: Probable chemoreceptor glutamine deamidase CheD 1 (201 aa).

Belongs to the CheD family.

It carries out the reaction L-glutaminyl-[protein] + H2O = L-glutamyl-[protein] + NH4(+). Functionally, probably deamidates glutamine residues to glutamate on methyl-accepting chemotaxis receptors (MCPs), playing an important role in chemotaxis. This is Probable chemoreceptor glutamine deamidase CheD 1 from Dechloromonas aromatica (strain RCB).